Here is a 116-residue protein sequence, read N- to C-terminus: Ribonuclease P protein component (116 aa).

It belongs to the RnpA family. In terms of assembly, consists of a catalytic RNA component (M1 or rnpB) and a protein subunit.

It catalyses the reaction Endonucleolytic cleavage of RNA, removing 5'-extranucleotides from tRNA precursor.. In terms of biological role, RNaseP catalyzes the removal of the 5'-leader sequence from pre-tRNA to produce the mature 5'-terminus. It can also cleave other RNA substrates such as 4.5S RNA. The protein component plays an auxiliary but essential role in vivo by binding to the 5'-leader sequence and broadening the substrate specificity of the ribozyme. The sequence is that of Ribonuclease P protein component from Carboxydothermus hydrogenoformans (strain ATCC BAA-161 / DSM 6008 / Z-2901).